The primary structure comprises 1843 residues: Xin actin-binding repeat-containing protein 1 (1843 aa).

The segment covering 1 to 10 (MADTQTQVAP) has biased composition (polar residues). The tract at residues 1–48 (MADTQTQVAPTPTMRMATAEDLPLPPPPALEDLPLPPPKESFSKFHQQ) is disordered. The interaction with VASP stretch occupies residues 1-54 (MADTQTQVAPTPTMRMATAEDLPLPPPPALEDLPLPPPKESFSKFHQQRQASEL). A compositionally biased stretch (pro residues) spans 23–39 (PLPPPPALEDLPLPPPK). Xin repeat units follow at residues 89-104 (GDVQ…WRLD), 121-136 (GDVQ…GSFA), 151-166 (GDVR…KPLD), and 186-201 (GDVQ…RPLD). The tract at residues 132–151 (EGSFANSTDQEPTRPQPGGG) is disordered. 3 positions are modified to phosphoserine: Ser205, Ser208, and Ser213. Xin repeat units lie at residues 226 to 241 (GDVK…EPLC) and 264 to 279 (NAVR…RPLD). Ser295 carries the phosphoserine modification. Residues 302 to 317 (PDVSATRWIFETQPLD) form a Xin 7 repeat. At Ser332 the chain carries Phosphoserine. Xin repeat units lie at residues 340 to 355 (PDVQ…RALD) and 376 to 391 (GDVR…KPLD). The interval 406–432 (DPQDGEGHLSSDSSSALPFSQSAPQRD) is disordered. Residues 415–429 (SSDSSSALPFSQSAP) are compositionally biased toward low complexity. Residues 436-451 (GDVKTFKNLFETLPLD) form a Xin 10 repeat. A disordered region spans residues 455–479 (QGEVLAHGSPSREEGTDSAGQAQGI). Xin repeat units lie at residues 507 to 522 (GDVQ…QPLD) and 545 to 560 (GDVG…QPLE). Positions 531 to 632 (IDVVRGITRQ…AQSCTWMFKP (102 aa)) are interaction with CTNNB1. Residues 564 to 577 (QREQQERQKEEGKS) show a composition bias toward basic and acidic residues. The interval 564-591 (QREQQERQKEEGKSQGDPQPEAPPKGDV) is disordered. Xin repeat units follow at residues 589–604 (GDVQ…CPMS), 621–636 (AEAQ…QPVD), 654–669 (GERQ…EPLQ), 691–706 (GQVS…LEAG), and 723–738 (GSVH…CPMG). Disordered stretches follow at residues 943–999 (SLRW…QAIG), 1063–1205 (AEAQ…MAWG), 1238–1277 (SGPQ…HRAE), 1289–1471 (DPLL…QKEL), and 1561–1696 (MSSL…DVSV). 2 stretches are compositionally biased toward polar residues: residues 1064-1073 (EAQSLHQQVL) and 1080-1089 (PTPTATSNPI). Over residues 1294 to 1311 (SHSSPAGQRTPGGSQTKT) the composition is skewed to polar residues. Positions 1357–1368 (GQREHQRGERDT) are enriched in basic and acidic residues. Residues 1393–1424 (GHSQPSLQHGLSTTAPRPTKNQATGSNAQSSE) show a composition bias toward polar residues. The stretch at 1462–1490 (DSLQRNQKELQGLLNQVQALEKEAASSVD) forms a coiled coil. Polar residues-rich tracts occupy residues 1588 to 1600 (VTVS…SGSG) and 1663 to 1679 (SRDS…QSAT). The interval 1685-1843 (TPSFKGNPDV…SCSYSQPAAQ (159 aa)) is interaction with FLNC.

This sequence belongs to the Xin family. In terms of assembly, interacts (via N-terminus) with CTTN; the interaction promotes CTTN localization to intercalated disks in cardiomyocytes. Interacts with CTNNB1. Interacts with FLNC and VASP. Interacts with F-actin. As to expression, expressed in skeletal muscle at areas of Z-disk disruption in a longitudinal pattern spanning one or more sarcomeres (at protein level). Expressed in the heart (at protein level). In terms of tissue distribution, expressed in the heart.

The protein localises to the cell junction. The protein resides in the adherens junction. It is found in the desmosome. Functionally, protects actin filaments from depolymerization. Required for correct cardiac intercalated disk ultrastructure via maintenance of cell-cell adhesion stability, and as a result maintains cardiac organ morphology, conductance and heart beat rhythm. Required for development of normal skeletal muscle morphology and muscle fiber type composition. Plays a role in regulating muscle satellite cell activation and survival, as a result promotes muscle fiber recovery from injury and fatigue. In Homo sapiens (Human), this protein is Xin actin-binding repeat-containing protein 1.